The chain runs to 525 residues: 2,3-bisphosphoglycerate-independent phosphoglycerate mutase (525 aa).

2 residues coordinate Mn(2+): D18 and S68. S68 functions as the Phosphoserine intermediate in the catalytic mechanism. Substrate contacts are provided by residues H129, R159 to D160, R194, R200, R269 to R272, and K345. Mn(2+)-binding residues include D413, H417, D454, H455, and H473.

Belongs to the BPG-independent phosphoglycerate mutase family. Monomer. Requires Mn(2+) as cofactor.

The enzyme catalyses (2R)-2-phosphoglycerate = (2R)-3-phosphoglycerate. Its pathway is carbohydrate degradation; glycolysis; pyruvate from D-glyceraldehyde 3-phosphate: step 3/5. Catalyzes the interconversion of 2-phosphoglycerate and 3-phosphoglycerate. This is 2,3-bisphosphoglycerate-independent phosphoglycerate mutase from Chromohalobacter salexigens (strain ATCC BAA-138 / DSM 3043 / CIP 106854 / NCIMB 13768 / 1H11).